A 243-amino-acid chain; its full sequence is 6-carboxyhexanoate--CoA ligase (243 aa).

It belongs to the BioW family. Homodimer. Requires Mg(2+) as cofactor.

It carries out the reaction heptanedioate + ATP + CoA = 6-carboxyhexanoyl-CoA + AMP + diphosphate. The protein operates within metabolic intermediate metabolism; pimeloyl-CoA biosynthesis; pimeloyl-CoA from pimelate: step 1/1. Catalyzes the transformation of pimelate into pimeloyl-CoA with concomitant hydrolysis of ATP to AMP. The chain is 6-carboxyhexanoate--CoA ligase from Corynebacterium pseudotuberculosis (strain FRC41).